The chain runs to 253 residues: Imidazole glycerol phosphate synthase subunit HisF (253 aa).

Residues Asp-11 and Asp-130 contribute to the active site.

This sequence belongs to the HisA/HisF family. As to quaternary structure, heterodimer of HisH and HisF.

The protein localises to the cytoplasm. The enzyme catalyses 5-[(5-phospho-1-deoxy-D-ribulos-1-ylimino)methylamino]-1-(5-phospho-beta-D-ribosyl)imidazole-4-carboxamide + L-glutamine = D-erythro-1-(imidazol-4-yl)glycerol 3-phosphate + 5-amino-1-(5-phospho-beta-D-ribosyl)imidazole-4-carboxamide + L-glutamate + H(+). It functions in the pathway amino-acid biosynthesis; L-histidine biosynthesis; L-histidine from 5-phospho-alpha-D-ribose 1-diphosphate: step 5/9. Functionally, IGPS catalyzes the conversion of PRFAR and glutamine to IGP, AICAR and glutamate. The HisF subunit catalyzes the cyclization activity that produces IGP and AICAR from PRFAR using the ammonia provided by the HisH subunit. This is Imidazole glycerol phosphate synthase subunit HisF from Acidithiobacillus ferrooxidans (strain ATCC 23270 / DSM 14882 / CIP 104768 / NCIMB 8455) (Ferrobacillus ferrooxidans (strain ATCC 23270)).